The chain runs to 611 residues: Aspartate--tRNA(Asp/Asn) ligase (611 aa).

Glu-174 lines the L-aspartate pocket. The segment at 198–201 is aspartate; sequence QLFK. L-aspartate is bound at residue Arg-220. Residues 220–222 and Gln-229 contribute to the ATP site; that span reads RDE. An L-aspartate-binding site is contributed by His-467. Glu-501 lines the ATP pocket. Residue Arg-508 participates in L-aspartate binding. ATP is bound at residue 553–556; that stretch reads GLDR.

This sequence belongs to the class-II aminoacyl-tRNA synthetase family. Type 1 subfamily. As to quaternary structure, homodimer.

It is found in the cytoplasm. It catalyses the reaction tRNA(Asx) + L-aspartate + ATP = L-aspartyl-tRNA(Asx) + AMP + diphosphate. Functionally, aspartyl-tRNA synthetase with relaxed tRNA specificity since it is able to aspartylate not only its cognate tRNA(Asp) but also tRNA(Asn). Reaction proceeds in two steps: L-aspartate is first activated by ATP to form Asp-AMP and then transferred to the acceptor end of tRNA(Asp/Asn). This is Aspartate--tRNA(Asp/Asn) ligase from Albidiferax ferrireducens (strain ATCC BAA-621 / DSM 15236 / T118) (Rhodoferax ferrireducens).